A 1358-amino-acid polypeptide reads, in one-letter code: DNA mismatch repair protein Msh6 (1358 aa).

Residues 1 to 87 (MSRQSTLYSF…SSAQAVPPSS (87 aa)) are disordered. 3 positions are modified to phosphoserine: Ser14, Ser38, and Ser40. Low complexity predominate over residues 25 to 46 (AEASRQGAAASGASASRGGDAA). Lys67 is modified (N6-acetyllysine). Low complexity predominate over residues 76 to 87 (ASSSAQAVPPSS). A phosphoserine mark is found at Ser91, Ser137, Ser200, Ser219, and Ser227. The 63-residue stretch at 92–154 (PGDLVWAKME…KRMLKPYTGS (63 aa)) folds into the PWWP domain. The tract at residues 197–360 (DEPSEPEEEE…VSGGGNDSSG (164 aa)) is disordered. 2 stretches are compositionally biased toward acidic residues: residues 198–209 (EPSEPEEEEETE) and 219–231 (SEED…EEEA). The span at 240-249 (RSSRQVKKRR) shows a compositional bias: basic residues. Residues Ser252, Ser254, Ser256, and Ser261 each carry the phosphoserine modification. Residues 263–273 (VEFKPDTKQEG) are compositionally biased toward basic and acidic residues. Position 269 is a phosphothreonine (Thr269). Phosphoserine occurs at positions 274, 275, 279, and 280. The segment covering 329–351 (LSETKSTLSAFSAPQNSESQTHV) has biased composition (polar residues). Thr487 is modified (phosphothreonine). The residue at position 503 (Lys503) is an N6-acetyllysine. Phosphoserine occurs at positions 827 and 932. Thr1007 carries the post-translational modification Phosphothreonine. 1132–1139 (GPNMGGKS) is an ATP binding site.

This sequence belongs to the DNA mismatch repair MutS family. In terms of assembly, component of the DNA mismatch repair (MMR) complex composed at least of MSH2, MSH3, MSH6, PMS1 and MLH1. Heterodimer consisting of MSH2-MSH6 (MutS alpha). Forms a ternary complex with MutL alpha (MLH1-PMS1). Interacts with MCM9. Part of the BRCA1-associated genome surveillance complex (BASC), which contains BRCA1, MSH2, MSH6, MLH1, ATM, BLM, PMS2 and the RAD50-MRE11-NBS1 protein complex. This association could be a dynamic process changing throughout the cell cycle and within subnuclear domains. In terms of processing, phosphorylated by PRKCZ, which may prevent MutS alpha degradation by the ubiquitin-proteasome pathway.

It is found in the nucleus. Its subcellular location is the chromosome. Component of the post-replicative DNA mismatch repair system (MMR). Heterodimerizes with MSH2 to form MutS alpha, which binds to DNA mismatches thereby initiating DNA repair. When bound, MutS alpha bends the DNA helix and shields approximately 20 base pairs, and recognizes single base mismatches and dinucleotide insertion-deletion loops (IDL) in the DNA. After mismatch binding, forms a ternary complex with the MutL alpha heterodimer, which is thought to be responsible for directing the downstream MMR events, including strand discrimination, excision, and resynthesis. ATP binding and hydrolysis play a pivotal role in mismatch repair functions. The ATPase activity associated with MutS alpha regulates binding similar to a molecular switch: mismatched DNA provokes ADP--&gt;ATP exchange, resulting in a discernible conformational transition that converts MutS alpha into a sliding clamp capable of hydrolysis-independent diffusion along the DNA backbone. This transition is crucial for mismatch repair. MutS alpha may also play a role in DNA homologous recombination repair. Recruited on chromatin in G1 and early S phase via its PWWP domain that specifically binds trimethylated 'Lys-36' of histone H3 (H3K36me3): early recruitment to chromatin to be replicated allowing a quick identification of mismatch repair to initiate the DNA mismatch repair reaction. The chain is DNA mismatch repair protein Msh6 from Mus musculus (Mouse).